Here is an 816-residue protein sequence, read N- to C-terminus: Molybdenum cofactor sulfurase (816 aa).

Residue Lys-273 is modified to N6-(pyridoxal phosphate)lysine. Cys-427 is a catalytic residue. The 166-residue stretch at 647-812 folds into the MOSC domain; that stretch reads NSDSQSHSCI…IRVGEEIIPN (166 aa).

Belongs to the class-V pyridoxal-phosphate-dependent aminotransferase family. MOCOS subfamily. Pyridoxal 5'-phosphate is required as a cofactor. As to expression, ubiquitously expressed.

It carries out the reaction Mo-molybdopterin + L-cysteine + AH2 = thio-Mo-molybdopterin + L-alanine + A + H2O. It functions in the pathway cofactor biosynthesis; molybdopterin biosynthesis. Sulfurates the molybdenum cofactor. Sulfation of molybdenum is essential for xanthine dehydrogenase (XDH) and aldehyde oxidase (ADO) enzymes in which molybdenum cofactor is liganded by 1 oxygen and 1 sulfur atom in active form. This Solanum lycopersicum (Tomato) protein is Molybdenum cofactor sulfurase (FLACCA).